The primary structure comprises 1312 residues: Multidrug resistance protein 3 (1312 aa).

The chain crosses the membrane as a helical span at residues 51 to 71 (GFIDYILLIGGIIGAMAAGVL). Residues 59-369 (IGGIIGAMAA…VAMPINALST (311 aa)) enclose the ABC transmembrane type-1 1 domain. The N-linked (GlcNAc...) asparagine glycan is linked to Asn98. A run of 5 helical transmembrane segments spans residues 127 to 147 (IYFAIGTTVGMFLMHFCFFVL), 197 to 217 (KFGVLFQTICGFIAGYAIGFS), 224 to 244 (LVIMAVTPFMLITVLFLGFFA), 302 to 322 (VVGVGLGMLLFFMMGSLALGS), and 344 to 364 (MVVFMSVLMATMSIAQVAMPI). Positions 404-643 (IKLEDVQFRY…KATYYGLVKR (240 aa)) constitute an ABC transporter 1 domain. 439–446 (GASGCGKS) provides a ligand contact to ATP. The ABC transmembrane type-1 2 domain occupies 724–1033 (LLSFLGLIGG…LGQMIPDVGK (310 aa)). 2 helical membrane-spanning segments follow: residues 725–745 (LSFLGLIGGIGAGAVFPFYMI) and 776–796 (IWILLFGLAVFVTTYMYLGLF). The N-linked (GlcNAc...) asparagine glycan is linked to Asn819. The next 3 membrane-spanning stretches (helical) occupy residues 852–872 (VGNVVNTLSSVGFGVGIAFYY), 874–894 (WKVALCVMAIAPVLIVIVFLN), and 958–978 (AFVSAANTFVTSCISAYSFYI). In terms of domain architecture, ABC transporter 2 spans 1068–1307 (IEFKDICFRY…KGFYYTLAMQ (240 aa)). 1103 to 1110 (GASGCGKS) serves as a coordination point for ATP.

Belongs to the ABC transporter superfamily. ABCB family. Multidrug resistance exporter (TC 3.A.1.201) subfamily.

It is found in the membrane. The enzyme catalyses ATP + H2O + xenobioticSide 1 = ADP + phosphate + xenobioticSide 2.. Energy-dependent efflux pump responsible for decreased drug accumulation in multidrug resistance parasites. This Entamoeba histolytica (strain ATCC 30459 / HM-1:IMSS / ABRM) protein is Multidrug resistance protein 3.